A 294-amino-acid polypeptide reads, in one-letter code: Shikimate dehydrogenase (NADP(+)) (294 aa).

Shikimate-binding positions include 23 to 25 (SRS) and T70. The Proton acceptor role is filled by K74. Shikimate contacts are provided by N95 and D110. NADP(+)-binding positions include 135 to 139 (GAGGA), 159 to 164 (NRTASR), and M232. A shikimate-binding site is contributed by Y234. G255 is a binding site for NADP(+).

The protein belongs to the shikimate dehydrogenase family. Homodimer.

The enzyme catalyses shikimate + NADP(+) = 3-dehydroshikimate + NADPH + H(+). It participates in metabolic intermediate biosynthesis; chorismate biosynthesis; chorismate from D-erythrose 4-phosphate and phosphoenolpyruvate: step 4/7. Its function is as follows. Involved in the biosynthesis of the chorismate, which leads to the biosynthesis of aromatic amino acids. Catalyzes the reversible NADPH linked reduction of 3-dehydroshikimate (DHSA) to yield shikimate (SA). This is Shikimate dehydrogenase (NADP(+)) from Cupriavidus pinatubonensis (strain JMP 134 / LMG 1197) (Cupriavidus necator (strain JMP 134)).